A 237-amino-acid chain; its full sequence is Prospore formation at selected spindle poles protein 1 (237 aa).

The protein localises to the nucleus. Its subcellular location is the cytoplasm. It is found in the cytoskeleton. The protein resides in the microtubule organizing center. It localises to the spindle pole body. In terms of biological role, involved in the pathway that organizes the shaping and sizing of the prospore membrane (PSM) during sporulation. Required to localize MPC54 to all four spindle pole bodies, and localize DON1 and SPO14 to four prospore membranes. The polypeptide is Prospore formation at selected spindle poles protein 1 (PFS1) (Saccharomyces cerevisiae (strain ATCC 204508 / S288c) (Baker's yeast)).